A 913-amino-acid polypeptide reads, in one-letter code: Vacuolar membrane protease (913 aa).

The Cytoplasmic portion of the chain corresponds to Met-1–Thr-15. Residues Thr-16 to Ala-36 form a helical membrane-spanning segment. Topologically, residues Asn-37–Tyr-364 are vacuolar. The N-linked (GlcNAc...) asparagine glycan is linked to Asn-117. Zn(2+)-binding residues include His-152 and Asp-164. Glu-196 (proton acceptor) is an active-site residue. Zn(2+)-binding residues include Glu-197, Glu-222, and His-296. The chain crosses the membrane as a helical span at residues Val-365–Cys-385. Topologically, residues Asn-386–Pro-394 are cytoplasmic. Residues Thr-395–Phe-415 form a helical membrane-spanning segment. Residues Thr-416–Asn-431 are Vacuolar-facing. A helical transmembrane segment spans residues Phe-432 to Ala-452. Over Leu-453 to Thr-465 the chain is Cytoplasmic. The helical transmembrane segment at Leu-466 to Leu-486 threads the bilayer. Over Ser-487–Thr-494 the chain is Vacuolar. Residues Gly-495–Cys-515 form a helical membrane-spanning segment. Residues Ser-516–Tyr-600 lie on the Cytoplasmic side of the membrane. A compositionally biased stretch (basic and acidic residues) spans Asn-540–Glu-552. The interval Asn-540 to Ser-578 is disordered. Polar residues predominate over residues Thr-557–Pro-566. Over residues Ser-567 to Ser-578 the composition is skewed to low complexity. The helical transmembrane segment at Leu-601 to Ala-621 threads the bilayer. Residues Leu-622 to Glu-634 are Vacuolar-facing. The chain crosses the membrane as a helical span at residues Ala-635–Thr-655. The Cytoplasmic segment spans residues Thr-656 to Arg-660. Residues Phe-661 to Ala-681 traverse the membrane as a helical segment. Over Pro-682–Leu-913 the chain is Vacuolar. Residues Asn-729, Asn-794, and Asn-810 are each glycosylated (N-linked (GlcNAc...) asparagine).

This sequence belongs to the peptidase M28 family. Zn(2+) is required as a cofactor.

Its subcellular location is the vacuole membrane. Its function is as follows. May be involved in vacuolar sorting and osmoregulation. The protein is Vacuolar membrane protease of Kluyveromyces lactis (strain ATCC 8585 / CBS 2359 / DSM 70799 / NBRC 1267 / NRRL Y-1140 / WM37) (Yeast).